The following is a 335-amino-acid chain: V-set and immunoglobulin domain-containing protein 1 (335 aa).

The signal sequence occupies residues Met1–Gly21. Positions Val22–Leu136 constitute an Ig-like V-type domain. The Extracellular segment spans residues Val22–Asn233. 2 disulfides stabilise this stretch: Cys43–Cys115 and Cys160–Cys210. Residues Pro139–Thr226 form the Ig-like C2-type domain. Residues Ile234 to Trp254 form a helical membrane-spanning segment. The Cytoplasmic portion of the chain corresponds to Val255–Phe335. The segment at Ser266–Phe335 is disordered. Polar residues predominate over residues Asn268 to Pro306. The segment covering Asn319–Phe335 has biased composition (basic and acidic residues).

Expressed in thymocytes.

It localises to the membrane. This is V-set and immunoglobulin domain-containing protein 1 (VSIG1) from Gallus gallus (Chicken).